The following is a 489-amino-acid chain: Beta-glucosidase 14 (489 aa).

Positions 1 to 21 (MTSKYFSVLVFIILASNEVVA) are cleaved as a signal peptide. Residue Gln-49 coordinates a beta-D-glucoside. N-linked (GlcNAc...) asparagine glycosylation is present at Asn-80. A beta-D-glucoside-binding positions include His-153 and 198-199 (NE). The active-site Proton donor is Glu-199. Cys-218 and Cys-226 form a disulfide bridge. The N-linked (GlcNAc...) asparagine glycan is linked to Asn-225. Tyr-343 provides a ligand contact to a beta-D-glucoside. Asn-357 carries an N-linked (GlcNAc...) asparagine glycan. Residues Glu-396, Trp-441, 448–449 (EW), and Phe-457 contribute to the a beta-D-glucoside site. Catalysis depends on Glu-396, which acts as the Nucleophile.

It belongs to the glycosyl hydrolase 1 family.

The enzyme catalyses Hydrolysis of terminal, non-reducing beta-D-glucosyl residues with release of beta-D-glucose.. This is Beta-glucosidase 14 from Arabidopsis thaliana (Mouse-ear cress).